The primary structure comprises 111 residues: Universal stress protein B (111 aa).

Helical transmembrane passes span 1–21 (MISTVALFWGLCVVCIINMAR) and 90–110 (FILTSALCGLVVISLIALLIW).

The protein belongs to the universal stress protein B family.

The protein localises to the cell inner membrane. The sequence is that of Universal stress protein B from Escherichia fergusonii (strain ATCC 35469 / DSM 13698 / CCUG 18766 / IAM 14443 / JCM 21226 / LMG 7866 / NBRC 102419 / NCTC 12128 / CDC 0568-73).